We begin with the raw amino-acid sequence, 376 residues long: 26S proteasome non-ATPase regulatory subunit 13 (376 aa).

The region spanning 171-338 (SYYKDALRFL…KRVHMTWVQP (168 aa)) is the PCI domain. Lys-298 bears the N6-acetyllysine mark.

The protein belongs to the proteasome subunit S11 family. As to quaternary structure, component of the 19S proteasome regulatory particle complex. The 26S proteasome consists of a 20S core particle (CP) and two 19S regulatory subunits (RP). The regulatory particle is made of a lid composed of 9 subunits including PSMD13, a base containing 6 ATPases and few additional components.

Component of the 26S proteasome, a multiprotein complex involved in the ATP-dependent degradation of ubiquitinated proteins. This complex plays a key role in the maintenance of protein homeostasis by removing misfolded or damaged proteins, which could impair cellular functions, and by removing proteins whose functions are no longer required. Therefore, the proteasome participates in numerous cellular processes, including cell cycle progression, apoptosis, or DNA damage repair. The chain is 26S proteasome non-ATPase regulatory subunit 13 from Rattus norvegicus (Rat).